The primary structure comprises 358 residues: UDP-N-acetylglucosamine--N-acetylmuramyl-(pentapeptide) pyrophosphoryl-undecaprenol N-acetylglucosamine transferase (358 aa).

Residues 11–13, N122, R161, S189, I243, 262–267, and Q288 contribute to the UDP-N-acetyl-alpha-D-glucosamine site; these read TGG and ALTVCE.

This sequence belongs to the glycosyltransferase 28 family. MurG subfamily.

It is found in the cell inner membrane. It catalyses the reaction di-trans,octa-cis-undecaprenyl diphospho-N-acetyl-alpha-D-muramoyl-L-alanyl-D-glutamyl-meso-2,6-diaminopimeloyl-D-alanyl-D-alanine + UDP-N-acetyl-alpha-D-glucosamine = di-trans,octa-cis-undecaprenyl diphospho-[N-acetyl-alpha-D-glucosaminyl-(1-&gt;4)]-N-acetyl-alpha-D-muramoyl-L-alanyl-D-glutamyl-meso-2,6-diaminopimeloyl-D-alanyl-D-alanine + UDP + H(+). The protein operates within cell wall biogenesis; peptidoglycan biosynthesis. Its function is as follows. Cell wall formation. Catalyzes the transfer of a GlcNAc subunit on undecaprenyl-pyrophosphoryl-MurNAc-pentapeptide (lipid intermediate I) to form undecaprenyl-pyrophosphoryl-MurNAc-(pentapeptide)GlcNAc (lipid intermediate II). The sequence is that of UDP-N-acetylglucosamine--N-acetylmuramyl-(pentapeptide) pyrophosphoryl-undecaprenol N-acetylglucosamine transferase from Coxiella burnetii (strain Dugway 5J108-111).